Reading from the N-terminus, the 451-residue chain is Gamma-aminobutyric acid receptor subunit alpha-2 (451 aa).

The signal sequence occupies residues 1–28 (MKTKLSTCNVWSLLLVLLVWDPVRLVLA). At 29-249 (NIQEDEAKNN…MTAHFHLKRK (221 aa)) the chain is on the extracellular side. The N-linked (GlcNAc...) asparagine glycan is linked to asparagine 38. Arginine 94 is a binding site for 4-aminobutanoate. Asparagine 138 is a glycosylation site (N-linked (GlcNAc...) asparagine). Threonine 157 is a binding site for 4-aminobutanoate. The cysteines at positions 166 and 180 are disulfide-linked. The chain crosses the membrane as a helical span at residues 250-270 (IGYFVIQTYLPCIMTVILSQV). Topologically, residues 271–280 (SFWLNRESVP) are cytoplasmic. The helical transmembrane segment at 281 to 300 (ARTVFGVTTVLTMTTLSISA) threads the bilayer. At 301–311 (RNSLPKVAYAT) the chain is on the extracellular side. The helical transmembrane segment at 312–332 (AMDWFIAVCYAFVFSALIEFA) threads the bilayer. Residues 333–420 (TVNYFTKRGW…FNSVSKIDRM (88 aa)) lie on the Cytoplasmic side of the membrane. Residues 389 to 408 (KSATTPEPNKKPENKPAEAK) are disordered. A compositionally biased stretch (basic and acidic residues) spans 396 to 408 (PNKKPENKPAEAK). A helical transmembrane segment spans residues 421-441 (SRIVFPVLFGTFNLVYWATYL). Residues 442-451 (NREPVLGVSP) are Extracellular-facing.

This sequence belongs to the ligand-gated ion channel (TC 1.A.9) family. Gamma-aminobutyric acid receptor (TC 1.A.9.5) subfamily. GABRA2 sub-subfamily. Heteropentamer, formed by a combination of alpha (GABRA1-6), beta (GABRB1-3), gamma (GABRG1-3), delta (GABRD), epsilon (GABRE), rho (GABRR1-3), pi (GABRP) and theta (GABRQ) subunits, each subunit exhibiting distinct physiological and pharmacological properties. Interacts with UBQLN1. Interacts with KIF21B. Interacts with LHFPL4. Interacts with SHISA7; interaction leads to the regulation of GABA(A) receptor trafficking, channel deactivation kinetics and pharmacology. Glycosylated.

It localises to the postsynaptic cell membrane. The protein localises to the cell membrane. Its subcellular location is the cytoplasmic vesicle membrane. The protein resides in the cell projection. It is found in the dendrite. The catalysed reaction is chloride(in) = chloride(out). Its activity is regulated as follows. Activated by pentobarbital. Inhibited by the antagonist bicuculline. Alpha subunit of the heteropentameric ligand-gated chloride channel gated by gamma-aminobutyric acid (GABA), a major inhibitory neurotransmitter in the brain. GABA-gated chloride channels, also named GABA(A) receptors (GABAAR), consist of five subunits arranged around a central pore and contain GABA active binding site(s) located at the alpha and beta subunit interface(s). When activated by GABA, GABAARs selectively allow the flow of chloride anions across the cell membrane down their electrochemical gradient. Chloride influx into the postsynaptic neuron following GABAAR opening decreases the neuron ability to generate a new action potential, thereby reducing nerve transmission. The alpha-2 subunit exhibits synaptogenic activity together with beta-2 and very little to no activity together with beta-3, the gamma-2 subunit being necessary but not sufficient to induce rapid synaptic contacts formation. This is Gamma-aminobutyric acid receptor subunit alpha-2 from Mus musculus (Mouse).